Consider the following 833-residue polypeptide: G-type lectin S-receptor-like serine/threonine-protein kinase RKS1 (833 aa).

An N-terminal signal peptide occupies residues 1–18; sequence MKVVFVIFFFFLFQFCIS. Residues 19-144 form the Bulb-type lectin domain; it reads VDTIMRRQSL…VTGRSFWESF (126 aa). The Extracellular segment spans residues 19 to 440; the sequence is VDTIMRRQSL…NGLSGKRRVL (422 aa). N-linked (GlcNAc...) asparagine glycosylation is found at N79, N92, N100, N109, N228, and N256. An EGF-like domain is found at 280–330; it reads PKEQCDNYAHCGPNGYCDSPSSKTFECTCLPGFEPKFPRHWFLRDSSGGCT. 3 disulfide bridges follow: C284/C296, C290/C306, and C308/C329. One can recognise a PAN domain in the interval 338–421; that stretch reads CSEKDGFVKL…SGQDFYIRVD (84 aa). 2 N-linked (GlcNAc...) asparagine glycosylation sites follow: N363 and N376. Cystine bridges form between C369–C396 and C373–C379. The helical transmembrane segment at 441 to 461 threads the bilayer; that stretch reads LILISLIAAVMLLTVILFCVV. Residues 462–833 are Cytoplasmic-facing; the sequence is RERRKSNRHR…DVTFSDIQGR (372 aa). The region spanning 515 to 800 is the Protein kinase domain; the sequence is FSSQNKLGAG…NLPNPKHPAF (286 aa). Residues 521 to 529 and K543 contribute to the ATP site; that span reads LGAGGFGPV. Phosphoserine is present on residues S549 and S564. The tract at residues 604-621 is caM-binding; that stretch reads EQRAELDWPKRMEIVRGI. The Proton acceptor role is filled by D640. S644 and S657 each carry phosphoserine. The residue at position 674 (T674) is a Phosphothreonine. 2 positions are modified to phosphoserine: S717 and S821.

This sequence belongs to the protein kinase superfamily. Ser/Thr protein kinase family.

Its subcellular location is the cell membrane. It catalyses the reaction L-seryl-[protein] + ATP = O-phospho-L-seryl-[protein] + ADP + H(+). The enzyme catalyses L-threonyl-[protein] + ATP = O-phospho-L-threonyl-[protein] + ADP + H(+). This Arabidopsis thaliana (Mouse-ear cress) protein is G-type lectin S-receptor-like serine/threonine-protein kinase RKS1 (RKS1).